We begin with the raw amino-acid sequence, 191 residues long: Leucyl/phenylalanyl-tRNA--protein transferase (191 aa).

Belongs to the L/F-transferase family.

It is found in the cytoplasm. The enzyme catalyses N-terminal L-lysyl-[protein] + L-leucyl-tRNA(Leu) = N-terminal L-leucyl-L-lysyl-[protein] + tRNA(Leu) + H(+). The catalysed reaction is N-terminal L-arginyl-[protein] + L-leucyl-tRNA(Leu) = N-terminal L-leucyl-L-arginyl-[protein] + tRNA(Leu) + H(+). It carries out the reaction L-phenylalanyl-tRNA(Phe) + an N-terminal L-alpha-aminoacyl-[protein] = an N-terminal L-phenylalanyl-L-alpha-aminoacyl-[protein] + tRNA(Phe). Its function is as follows. Functions in the N-end rule pathway of protein degradation where it conjugates Leu, Phe and, less efficiently, Met from aminoacyl-tRNAs to the N-termini of proteins containing an N-terminal arginine or lysine. This Gloeothece citriformis (strain PCC 7424) (Cyanothece sp. (strain PCC 7424)) protein is Leucyl/phenylalanyl-tRNA--protein transferase.